A 334-amino-acid polypeptide reads, in one-letter code: L-lactate dehydrogenase C chain (334 aa).

NAD(+) contacts are provided by residues 30–58 (GQVG…VEDK) and Arg-100. Residues Arg-107, Asn-139, and Arg-170 each coordinate substrate. Asn-139 lines the NAD(+) pocket. Residue His-194 is the Proton acceptor of the active site. Thr-249 is a binding site for substrate.

The protein belongs to the LDH/MDH superfamily. LDH family. In terms of assembly, homotetramer. Eye and liver.

The protein resides in the cytoplasm. It catalyses the reaction (S)-lactate + NAD(+) = pyruvate + NADH + H(+). It participates in fermentation; pyruvate fermentation to lactate; (S)-lactate from pyruvate: step 1/1. The sequence is that of L-lactate dehydrogenase C chain (ldhc) from Fundulus heteroclitus (Killifish).